The chain runs to 292 residues: Ribosomal RNA small subunit methyltransferase H (292 aa).

Residues G32 to H34, D51, L87, D101, and Q108 each bind S-adenosyl-L-methionine.

The protein belongs to the methyltransferase superfamily. RsmH family.

It is found in the cytoplasm. It carries out the reaction cytidine(1402) in 16S rRNA + S-adenosyl-L-methionine = N(4)-methylcytidine(1402) in 16S rRNA + S-adenosyl-L-homocysteine + H(+). In terms of biological role, specifically methylates the N4 position of cytidine in position 1402 (C1402) of 16S rRNA. In Pseudothermotoga lettingae (strain ATCC BAA-301 / DSM 14385 / NBRC 107922 / TMO) (Thermotoga lettingae), this protein is Ribosomal RNA small subunit methyltransferase H.